A 335-amino-acid chain; its full sequence is Cytoskeleton protein RodZ (335 aa).

Over 1-111 (MNTEATHDQN…LGKRRKKRDG (111 aa)) the chain is Cytoplasmic. One can recognise an HTH cro/C1-type domain in the interval 19–71 (LRNAREQLGLSQQAVAERLCLKVSTVRDIEEDKAPADLASTFLRGYIRSYARL). Positions 30-49 (QQAVAERLCLKVSTVRDIEE) form a DNA-binding region, H-T-H motif. Residues 112-132 (WLMTFTWLVLFVVIGLSGAWW) form a helical; Signal-anchor for type II membrane protein membrane-spanning segment. The Periplasmic segment spans residues 133 to 335 (WQDHKAQQEE…TLNAEQSPAQ (203 aa)). Over residues 148 to 164 (DQSSAELNNNQSQSVPL) the composition is skewed to polar residues. A disordered region spans residues 148 to 244 (DQSSAELNNN…PLPTDQAGVT (97 aa)). Low complexity-rich tracts occupy residues 165 to 205 (DTST…DPQQ) and 217 to 239 (DTAATPAPAATTTPDGAAPLPTD).

This sequence belongs to the RodZ family.

It localises to the cell inner membrane. Functionally, cytoskeletal protein that is involved in cell-shape control through regulation of the length of the long axis. The chain is Cytoskeleton protein RodZ from Escherichia coli O6:H1 (strain CFT073 / ATCC 700928 / UPEC).